The following is a 202-amino-acid chain: Glycerol-3-phosphate acyltransferase (202 aa).

6 helical membrane-spanning segments follow: residues 3-23, 61-81, 87-107, 117-137, 144-164, and 167-187; these read NLII…LILT, IATI…LKFL, LLWS…YLLF, AGAM…VWAV, ISSL…FIFN, and LEIH…YKHL.

Belongs to the PlsY family. In terms of assembly, probably interacts with PlsX.

It is found in the cell inner membrane. It carries out the reaction an acyl phosphate + sn-glycerol 3-phosphate = a 1-acyl-sn-glycero-3-phosphate + phosphate. It functions in the pathway lipid metabolism; phospholipid metabolism. Functionally, catalyzes the transfer of an acyl group from acyl-phosphate (acyl-PO(4)) to glycerol-3-phosphate (G3P) to form lysophosphatidic acid (LPA). This enzyme utilizes acyl-phosphate as fatty acyl donor, but not acyl-CoA or acyl-ACP. This is Glycerol-3-phosphate acyltransferase from Campylobacter jejuni subsp. doylei (strain ATCC BAA-1458 / RM4099 / 269.97).